Here is a 63-residue protein sequence, read N- to C-terminus: Large ribosomal subunit protein uL29 (63 aa).

Belongs to the universal ribosomal protein uL29 family.

This is Large ribosomal subunit protein uL29 from Klebsiella pneumoniae (strain 342).